A 53-amino-acid chain; its full sequence is Large ribosomal subunit protein bL32c (53 aa).

The disordered stretch occupies residues 1–21 (MAVPKKRTSKSKKKSRRSHWI).

This sequence belongs to the bacterial ribosomal protein bL32 family.

The protein localises to the plastid. Its subcellular location is the chloroplast. The chain is Large ribosomal subunit protein bL32c (rpl32) from Cyanidium caldarium (Red alga).